A 382-amino-acid chain; its full sequence is Cytochrome b (382 aa).

The next 4 membrane-spanning stretches (helical) occupy residues 28-48, 72-94, 107-127, and 169-189; these read YGFL…FLAS, WCFR…LHIL, SWIS…IGYV, and FFVL…IHIF. Heme b contacts are provided by His78 and His92. Heme b-binding residues include His173 and His187. Residue His192 participates in a ubiquinone binding. The next 4 membrane-spanning stretches (helical) occupy residues 214-234, 274-294, 317-337, and 340-360; these read LLSL…LQSI, IPSK…LFLL, VPMI…CQLP, and IFIL…LFAL.

The protein belongs to the cytochrome b family. The main subunits of complex b-c1 are: cytochrome b, cytochrome c1 and the Rieske protein. It depends on heme b as a cofactor.

Its subcellular location is the mitochondrion inner membrane. In terms of biological role, component of the ubiquinol-cytochrome c reductase complex (complex III or cytochrome b-c1 complex) that is part of the mitochondrial respiratory chain. The b-c1 complex mediates electron transfer from ubiquinol to cytochrome c. Contributes to the generation of a proton gradient across the mitochondrial membrane that is then used for ATP synthesis. This is Cytochrome b (MT-CYB) from Plasmodium vivax (strain Salvador I).